Here is a 208-residue protein sequence, read N- to C-terminus: FMN-dependent NADH:quinone oxidoreductase 1 (208 aa).

Ser-10 lines the FMN pocket.

Belongs to the azoreductase type 1 family. Homodimer. It depends on FMN as a cofactor.

It catalyses the reaction 2 a quinone + NADH + H(+) = 2 a 1,4-benzosemiquinone + NAD(+). The catalysed reaction is N,N-dimethyl-1,4-phenylenediamine + anthranilate + 2 NAD(+) = 2-(4-dimethylaminophenyl)diazenylbenzoate + 2 NADH + 2 H(+). In terms of biological role, quinone reductase that provides resistance to thiol-specific stress caused by electrophilic quinones. Contributes to resistance to 2-methylhydroquinone (2-MHQ) and catechol. Functionally, also exhibits azoreductase activity. Catalyzes the reductive cleavage of the azo bond in aromatic azo compounds to the corresponding amines. This Bacillus subtilis (strain 168) protein is FMN-dependent NADH:quinone oxidoreductase 1.